The sequence spans 40 residues: Amyloid-beta precursor protein (40 aa).

The protein belongs to the APP family. Binds, via its C-terminus, to the PID domain of several cytoplasmic proteins, including APBB family members, the APBA family, MAPK8IP1, SHC1 and NUMB and DAB1. Binding to DAB1 inhibits its serine phosphorylation. Interacts (via NPXY motif) with DAB2 (via PID domain); the interaction is impaired by tyrosine phosphorylation of the NPXY motif. Also interacts with GPCR-like protein BPP, APPBP1, IB1, KNS2 (via its TPR domains), APPBP2 (via BaSS) and DDB1. In vitro, it binds MAPT via the MT-binding domains. Associates with microtubules in the presence of ATP and in a kinesin-dependent manner. Interacts, through a C-terminal domain, with GNAO1. Interacts with CPEB1, ANKS1B and AGER. Interacts with ITM2B. Interacts with ITM2C. Interacts with IDE. Can form homodimers; dimerization is enhanced in the presence of Cu(2+) ions. Can form homodimers; this is promoted by heparin binding. Interacts with SORL1 (via N-terminal ectodomain); this interaction retains APP in the trans-Golgi network and reduces processing into soluble APP-alpha and amyloid-beta peptides. Interacts with PLD3. Interacts with VDAC1. Interacts with NSG1; could regulate APP processing. Interacts with LRRK2. Interacts (via cytoplasmic domain) with KIF5B. Interacts (via C-terminus) with APBB2/FE65L1 (via C-terminus). Interacts (via intracellular domain) with APBB3. Proteolytically processed under normal cellular conditions. Cleavage either by alpha-secretase, beta-secretase or theta-secretase leads to generation and extracellular release of soluble APP peptides, S-APP-alpha and S-APP-beta, and the retention of corresponding membrane-anchored C-terminal fragments, C80, C83 and C99. Subsequent processing of C80 and C83 by gamma-secretase yields P3 peptides. This is the major secretory pathway and is non-amyloidogenic. Alternatively, presenilin/nicastrin-mediated gamma-secretase processing of C99 releases the amyloid-beta proteins, amyloid-beta protein 40 and amyloid-beta protein 42, major components of amyloid plaques, and the cytotoxic C-terminal fragments, gamma-CTF(50), gamma-CTF(57) and gamma-CTF(59). PSEN1 cleavage is more efficient with C83 than with C99 as substrate (in vitro). Amyloid-beta protein 40 and Amyloid-beta protein 42 are cleaved by ACE. Many other minor amyloid-beta peptides, amyloid-beta 1-X peptides, are found in cerebral spinal fluid (CSF) including the amyloid-beta X-15 peptides, produced from the cleavage by alpha-secretase.

It is found in the cell membrane. It localises to the membrane. The protein resides in the perikaryon. Its subcellular location is the cell projection. The protein localises to the growth cone. It is found in the clathrin-coated pit. It localises to the early endosome. The protein resides in the cytoplasmic vesicle. Functionally, functions as a cell surface receptor and performs physiological functions on the surface of neurons relevant to neurite growth, neuronal adhesion and axonogenesis. Interaction between APP molecules on neighboring cells promotes synaptogenesis. Involved in cell mobility and transcription regulation through protein-protein interactions. Can promote transcription activation through binding to APBB1-KAT5 and inhibit Notch signaling through interaction with Numb. Couples to apoptosis-inducing pathways such as those mediated by G(o) and JIP. Inhibits G(o)-alpha ATPase activity. Acts as a kinesin I membrane receptor, mediating the axonal transport of beta-secretase and presenilin 1. May be involved in copper homeostasis/oxidative stress through copper ion reduction. In vitro, copper-metallated APP induces neuronal death directly or is potentiated through Cu(2+)-mediated low-density lipoprotein oxidation. Can regulate neurite outgrowth through binding to components of the extracellular matrix such as heparin and collagen I and IV. Induces a AGER-dependent pathway that involves activation of p38 MAPK, resulting in internalization of amyloid-beta peptide and mitochondrial dysfunction in cultured cortical neurons. Provides Cu(2+) ions for GPC1 which are required for release of nitric oxide (NO) and subsequent degradation of the heparan sulfate chains on GPC1. The polypeptide is Amyloid-beta precursor protein (Felis catus (Cat)).